Consider the following 524-residue polypeptide: MSQPVTPRRTTRSSASASPSPAPASPTSPPKSRPKPSPRRQLLAAAAAPPKEDGSSADALLAELPGRRAQAMDILRLLAPAPALPLMLHGGAATGKTRALLLALRYLRPSQRLVYAALRSLPSPRALFASLLSQLSATPFSTSSRHRVPDKPSDFVAALRDALNGIVSQGEVVYLVFDNLEVVRSWDKGGQLLPLLLRLHDLLQLPQVVLVYVSSATPDAYYSMTGSVEPNYVYFPDYTVDEVRDILMHDHPNPKLYSSFLSVALKPLFRVTRRVDELSAVLEPLFRRYCEPLGDLKAVPDEGMKRRLFEHVQSHLAVALNETFNVPMRASMDEIKDGGSAGKGSAKRQFAGKDGLSSELEFHMSVSAKYLLLSAFLASRNPATLDAALFDSTGGLDNRKRKRKSSQASMHMKDTIVEEMLMKGPGTFPLERLLAIFQCITSVSEDILDEIDCPGNMASESGTTGLMSDVLLQLSTLCNSNFLSKSRSCPLEGSARYRSNIDEDLALKVARSVNFPLSKYMYRR.

Low complexity predominate over residues 1-19 (MSQPVTPRRTTRSSASASP). The segment at 1-56 (MSQPVTPRRTTRSSASASPSPAPASPTSPPKSRPKPSPRRQLLAAAAAPPKEDGSS) is disordered. The span at 20-31 (SPAPASPTSPPK) shows a compositional bias: pro residues. Residues 39-49 (RRQLLAAAAAP) are compositionally biased toward low complexity. 90–97 (GGAATGKT) serves as a coordination point for ATP.

This sequence belongs to the ORC5 family. As to quaternary structure, component of the origin recognition complex (ORC) composed of at least ORC1, ORC2, ORC3, ORC4, ORC5 and ORC6. ORC is regulated in a cell-cycle and development dependent manner. It is sequentially assembled at the exit from anaphase of mitosis and disassembled as cells enter S phase.

The protein resides in the nucleus. In terms of biological role, component of the origin recognition complex (ORC) that binds origins of replication. DNA-binding is ATP-dependent. The specific DNA sequences that define origins of replication have not been identified yet. ORC is required to assemble the pre-replication complex necessary to initiate DNA replication. The sequence is that of Origin of replication complex subunit 5 from Oryza sativa subsp. indica (Rice).